We begin with the raw amino-acid sequence, 154 residues long: 6,7-dimethyl-8-ribityllumazine synthase (154 aa).

Residues Phe22, Ser56 to Glu58, and Val81 to Ile83 contribute to the 5-amino-6-(D-ribitylamino)uracil site. Glu86–Thr87 provides a ligand contact to (2S)-2-hydroxy-3-oxobutyl phosphate. His89 (proton donor) is an active-site residue. Residue Phe114 coordinates 5-amino-6-(D-ribitylamino)uracil. Arg128 lines the (2S)-2-hydroxy-3-oxobutyl phosphate pocket.

This sequence belongs to the DMRL synthase family.

The enzyme catalyses (2S)-2-hydroxy-3-oxobutyl phosphate + 5-amino-6-(D-ribitylamino)uracil = 6,7-dimethyl-8-(1-D-ribityl)lumazine + phosphate + 2 H2O + H(+). It functions in the pathway cofactor biosynthesis; riboflavin biosynthesis; riboflavin from 2-hydroxy-3-oxobutyl phosphate and 5-amino-6-(D-ribitylamino)uracil: step 1/2. Catalyzes the formation of 6,7-dimethyl-8-ribityllumazine by condensation of 5-amino-6-(D-ribitylamino)uracil with 3,4-dihydroxy-2-butanone 4-phosphate. This is the penultimate step in the biosynthesis of riboflavin. The polypeptide is 6,7-dimethyl-8-ribityllumazine synthase (Chlamydia caviae (strain ATCC VR-813 / DSM 19441 / 03DC25 / GPIC) (Chlamydophila caviae)).